The chain runs to 472 residues: Zinc finger CCCH domain-containing protein 59 (472 aa).

A disordered region spans residues 87-139 (YKSPEGNRPRQNAANGSAKPQVIGTGHRVSNQPRKNAVYGPRSSSLSDTRGCG). The segment at 145–172 (SPKKSVCNFWKDGNCKKGEKCQFLHSWS) adopts a C3H1-type zinc-finger fold. 5 WD repeats span residues 185–226 (GHKN…RSIN), 261–301 (HLEG…SDPF), 310–347 (HHSGEVTCFVVGGEVLYSGSVDKTIKVWDLNTLQCRMT), 350–387 (QHIGTVTSLLCWDKCLISSSLDGTIKLWACSENESLKV), and 436–472 (FSTQTICTLTIGPGGLLFSGDKSGNLRVWSLASGTKV).

The protein is Zinc finger CCCH domain-containing protein 59 (ZFWD3) of Arabidopsis thaliana (Mouse-ear cress).